Reading from the N-terminus, the 315-residue chain is Methionyl-tRNA formyltransferase (315 aa).

Residue 113–116 (SLLP) coordinates (6S)-5,6,7,8-tetrahydrofolate.

It belongs to the Fmt family.

The catalysed reaction is L-methionyl-tRNA(fMet) + (6R)-10-formyltetrahydrofolate = N-formyl-L-methionyl-tRNA(fMet) + (6S)-5,6,7,8-tetrahydrofolate + H(+). Functionally, attaches a formyl group to the free amino group of methionyl-tRNA(fMet). The formyl group appears to play a dual role in the initiator identity of N-formylmethionyl-tRNA by promoting its recognition by IF2 and preventing the misappropriation of this tRNA by the elongation apparatus. The polypeptide is Methionyl-tRNA formyltransferase (Salmonella gallinarum (strain 287/91 / NCTC 13346)).